A 196-amino-acid chain; its full sequence is Ras-related protein RabC (196 aa).

A GTP-binding site is contributed by 13–20; the sequence is GESGVGKS. An Effector region motif is present at residues 35–43; it reads FAPTLGVDF. GTP contacts are provided by residues 63 to 67 and 121 to 124; these read DTAGQ and NKSD. S-geranylgeranyl cysteine attachment occurs at residues Cys195 and Cys196.

This sequence belongs to the small GTPase superfamily. Rab family.

It is found in the cell membrane. The chain is Ras-related protein RabC (rabC) from Dictyostelium discoideum (Social amoeba).